Consider the following 787-residue polypeptide: Protocadherin beta-15 (787 aa).

The N-terminal stretch at 1–26 (MEPAGERFPEQRQVLILLLLLEVTLA) is a signal peptide. The Extracellular segment spans residues 27-690 (GWEPRRYSVM…AQADSLTVYL (664 aa)). Cadherin domains are found at residues 35–133 (VMEE…SPEF), 138–242 (ITLK…APEF), 247–347 (YEVQ…FPEL), 352–451 (LTSP…APAF), and 456–561 (YTLF…SPFV). N-linked (GlcNAc...) asparagine glycosylation is found at Asn418 and Asn436. A glycan (N-linked (GlcNAc...) asparagine) is linked at Asn567. Positions 568–671 (GSAPCTELVP…LVDGFSQPYL (104 aa)) constitute a Cadherin 6 domain. The chain crosses the membrane as a helical span at residues 691–711 (VVALASVSSLFLFSVLLFVAV). Residues 712-787 (RLCRRSRAAS…DSRRKSEFLE (76 aa)) lie on the Cytoplasmic side of the membrane.

It localises to the cell membrane. Potential calcium-dependent cell-adhesion protein. May be involved in the establishment and maintenance of specific neuronal connections in the brain. The polypeptide is Protocadherin beta-15 (PCDHB15) (Pan troglodytes (Chimpanzee)).